The sequence spans 195 residues: Nucleoid occlusion factor SlmA (195 aa).

In terms of domain architecture, HTH tetR-type spans 6 to 66 (PSRRESILQA…ALIEFAEEAV (61 aa)). A DNA-binding region (H-T-H motif) is located at residues 29 to 48 (TTAGLAKTVGVTEAALYRHF). The stretch at 118–138 (RKRASQFFERLETQIRQALKE) forms a coiled coil.

Belongs to the nucleoid occlusion factor SlmA family. Homodimer. Interacts with FtsZ.

Its subcellular location is the cytoplasm. The protein localises to the nucleoid. Functionally, required for nucleoid occlusion (NO) phenomenon, which prevents Z-ring formation and cell division over the nucleoid. Acts as a DNA-associated cell division inhibitor that binds simultaneously chromosomal DNA and FtsZ, and disrupts the assembly of FtsZ polymers. SlmA-DNA-binding sequences (SBS) are dispersed on non-Ter regions of the chromosome, preventing FtsZ polymerization at these regions. In Marinobacter nauticus (strain ATCC 700491 / DSM 11845 / VT8) (Marinobacter aquaeolei), this protein is Nucleoid occlusion factor SlmA.